Reading from the N-terminus, the 302-residue chain is Sulfate adenylyltransferase subunit 2 (302 aa).

It belongs to the PAPS reductase family. CysD subfamily. In terms of assembly, heterodimer composed of CysD, the smaller subunit, and CysN.

It catalyses the reaction sulfate + ATP + H(+) = adenosine 5'-phosphosulfate + diphosphate. It participates in sulfur metabolism; hydrogen sulfide biosynthesis; sulfite from sulfate: step 1/3. With CysN forms the ATP sulfurylase (ATPS) that catalyzes the adenylation of sulfate producing adenosine 5'-phosphosulfate (APS) and diphosphate, the first enzymatic step in sulfur assimilation pathway. APS synthesis involves the formation of a high-energy phosphoric-sulfuric acid anhydride bond driven by GTP hydrolysis by CysN coupled to ATP hydrolysis by CysD. This chain is Sulfate adenylyltransferase subunit 2, found in Serratia proteamaculans (strain 568).